The following is a 1830-amino-acid chain: Urea amidolyase (1830 aa).

ATP is bound by residues 115–122 (GAIVIGKT), Lys740, Glu823, and Asn858. The 444-residue stretch at 625-1068 (PFETVLIANR…ATKILDSYDY (444 aa)) folds into the Biotin carboxylation domain. One can recognise an ATP-grasp domain in the interval 744 to 941 (REIAEKAGVP…LVEWMLRIAA (198 aa)). Residues 1752–1830 (AVEEEYPEDA…DAGDLVAVIQ (79 aa)) enclose the Biotinyl-binding domain. Lys1796 bears the N6-biotinyllysine mark.

It belongs to the DUR1,2 family. Monomer. Requires biotin as cofactor.

It carries out the reaction urea + hydrogencarbonate + ATP = urea-1-carboxylate + ADP + phosphate + H(+). It catalyses the reaction urea-1-carboxylate + H2O + 3 H(+) = 2 NH4(+) + 2 CO2. Its pathway is nitrogen metabolism; urea degradation; CO(2) and NH(3) from urea (allophanate route): step 1/2. It participates in nitrogen metabolism; urea degradation; CO(2) and NH(3) from urea (allophanate route): step 2/2. In terms of biological role, involved in uracil catabolism. Hydrolysis of urea to ammonia and CO(2). The sequence is that of Urea amidolyase (DUR1,2) from Lachancea kluyveri (Yeast).